Reading from the N-terminus, the 723-residue chain is Polyribonucleotide nucleotidyltransferase (723 aa).

Residues aspartate 488 and aspartate 494 each coordinate Mg(2+). In terms of domain architecture, KH spans 555–614; sequence PRMITMKIHPDKIREVIGKGGSTIQALTKETGTTIDIQEDGTITIASTSTDGMAEAKRRI. The 69-residue stretch at 624-692 folds into the S1 motif domain; the sequence is GKIYAGTVLK…EKGRLRLSLK (69 aa). The segment at 701 to 723 is disordered; it reads SISPINAGEAAAPAAPAEGSEQQ. The segment covering 707–723 has biased composition (low complexity); the sequence is AGEAAAPAAPAEGSEQQ.

It belongs to the polyribonucleotide nucleotidyltransferase family. Mg(2+) is required as a cofactor.

The protein localises to the cytoplasm. It catalyses the reaction RNA(n+1) + phosphate = RNA(n) + a ribonucleoside 5'-diphosphate. In terms of biological role, involved in mRNA degradation. Catalyzes the phosphorolysis of single-stranded polyribonucleotides processively in the 3'- to 5'-direction. In Cupriavidus necator (strain ATCC 17699 / DSM 428 / KCTC 22496 / NCIMB 10442 / H16 / Stanier 337) (Ralstonia eutropha), this protein is Polyribonucleotide nucleotidyltransferase.